A 698-amino-acid polypeptide reads, in one-letter code: Elongation factor G (698 aa).

A tr-type G domain is found at Ala8–Leu284. Residues Ala17–Thr24, Asp81–His85, and Asn135–Asp138 contribute to the GTP site. Positions Ile289–Pro309 are disordered.

The protein belongs to the TRAFAC class translation factor GTPase superfamily. Classic translation factor GTPase family. EF-G/EF-2 subfamily.

It is found in the cytoplasm. Its function is as follows. Catalyzes the GTP-dependent ribosomal translocation step during translation elongation. During this step, the ribosome changes from the pre-translocational (PRE) to the post-translocational (POST) state as the newly formed A-site-bound peptidyl-tRNA and P-site-bound deacylated tRNA move to the P and E sites, respectively. Catalyzes the coordinated movement of the two tRNA molecules, the mRNA and conformational changes in the ribosome. The protein is Elongation factor G of Salinispora arenicola (strain CNS-205).